The following is a 262-amino-acid chain: tRNA pseudouridine synthase A (262 aa).

The active-site Nucleophile is Asp52. Tyr103 provides a ligand contact to substrate.

The protein belongs to the tRNA pseudouridine synthase TruA family.

The enzyme catalyses uridine(38/39/40) in tRNA = pseudouridine(38/39/40) in tRNA. Its function is as follows. Formation of pseudouridine at positions 38, 39 and 40 in the anticodon stem and loop of transfer RNAs. The sequence is that of tRNA pseudouridine synthase A from Methanococcus maripaludis (strain C6 / ATCC BAA-1332).